The primary structure comprises 441 residues: Glutamyl-tRNA reductase (441 aa).

Substrate contacts are provided by residues 49 to 52 (TCNR), serine 109, 114 to 116 (EGQ), and glutamine 120. The Nucleophile role is filled by cysteine 50. 198-203 (GAGRMS) is an NADP(+) binding site.

Belongs to the glutamyl-tRNA reductase family. As to quaternary structure, homodimer.

The enzyme catalyses (S)-4-amino-5-oxopentanoate + tRNA(Glu) + NADP(+) = L-glutamyl-tRNA(Glu) + NADPH + H(+). It functions in the pathway porphyrin-containing compound metabolism; protoporphyrin-IX biosynthesis; 5-aminolevulinate from L-glutamyl-tRNA(Glu): step 1/2. The protein operates within porphyrin-containing compound metabolism; chlorophyll biosynthesis. In terms of biological role, catalyzes the NADPH-dependent reduction of glutamyl-tRNA(Glu) to glutamate 1-semialdehyde (GSA). This is Glutamyl-tRNA reductase from Prochlorococcus marinus (strain NATL2A).